Here is a 426-residue protein sequence, read N- to C-terminus: Serine hydroxymethyltransferase (426 aa).

Residues Leu122 and 126 to 128 (GHL) contribute to the (6S)-5,6,7,8-tetrahydrofolate site. Position 231 is an N6-(pyridoxal phosphate)lysine (Lys231). Residues Glu247 and 355 to 357 (SPF) each bind (6S)-5,6,7,8-tetrahydrofolate.

Belongs to the SHMT family. In terms of assembly, homodimer. Requires pyridoxal 5'-phosphate as cofactor.

It is found in the cytoplasm. The enzyme catalyses (6R)-5,10-methylene-5,6,7,8-tetrahydrofolate + glycine + H2O = (6S)-5,6,7,8-tetrahydrofolate + L-serine. It participates in one-carbon metabolism; tetrahydrofolate interconversion. It functions in the pathway amino-acid biosynthesis; glycine biosynthesis; glycine from L-serine: step 1/1. In terms of biological role, catalyzes the reversible interconversion of serine and glycine with tetrahydrofolate (THF) serving as the one-carbon carrier. This reaction serves as the major source of one-carbon groups required for the biosynthesis of purines, thymidylate, methionine, and other important biomolecules. Also exhibits THF-independent aldolase activity toward beta-hydroxyamino acids, producing glycine and aldehydes, via a retro-aldol mechanism. The protein is Serine hydroxymethyltransferase of Cyanothece sp. (strain PCC 7425 / ATCC 29141).